Here is a 34-residue protein sequence, read N- to C-terminus: Cycloamanide B proprotein (34 aa).

Positions 1-10 are excised as a propeptide; the sequence is MSDINAARLP. The cyclopeptide (Ser-Pro) cross-link spans 11–17; sequence SFFFPIP. A propeptide spanning residues 18–34 is cleaved from the precursor; that stretch reads CISDDIEMVLTRGESLC.

Belongs to the MSDIN fungal toxin family. Processed by the macrocyclase-peptidase enzyme POPB to yield a cyclic decapeptide. POPB first removes 10 residues from the N-terminus. Conformational trapping of the remaining peptide forces the enzyme to release this intermediate rather than proceed to macrocyclization. The enzyme rebinds the remaining peptide in a different conformation and catalyzes macrocyclization of the N-terminal 7 residues.

Cyclic heptapeptide that belongs to the MSDIN-like toxin family responsible for a large number of food poisoning cases and deaths. Cycloaminide B is non-toxic to mammals but shows immunosuppressive activity, probably through the inhibition of the action of interleukin-1 and interleukin-2. The polypeptide is Cycloamanide B proprotein (Amanita phalloides (Death cap)).